The following is a 79-amino-acid chain: MSDIEQRVKKIVAEQLGVAEADIKIESSFVDDLGADSLDTVELVMALEDEFEMEIPDEQAEKITTVQQAIDYAKAHVKA.

Positions 2-77 (SDIEQRVKKI…QAIDYAKAHV (76 aa)) constitute a Carrier domain. The residue at position 37 (Ser37) is an O-(pantetheine 4'-phosphoryl)serine.

The protein belongs to the acyl carrier protein (ACP) family. 4'-phosphopantetheine is transferred from CoA to a specific serine of apo-ACP by AcpS. This modification is essential for activity because fatty acids are bound in thioester linkage to the sulfhydryl of the prosthetic group.

It is found in the cytoplasm. It functions in the pathway lipid metabolism; fatty acid biosynthesis. Its function is as follows. Carrier of the growing fatty acid chain in fatty acid biosynthesis. This is Acyl carrier protein from Janthinobacterium sp. (strain Marseille) (Minibacterium massiliensis).